The sequence spans 135 residues: Protein NrdI (135 aa).

This sequence belongs to the NrdI family.

Probably involved in ribonucleotide reductase function. This chain is Protein NrdI, found in Pectobacterium atrosepticum (strain SCRI 1043 / ATCC BAA-672) (Erwinia carotovora subsp. atroseptica).